Consider the following 120-residue polypeptide: PYEKIGAELVKEVAKKTDDVAGDGTTTATVLAQALVREGLRNVAAGANPLGLKRGIEKAVEKVSSTLLASAKEVETKEQIAATAGISAGDQTIGDLIAEAMDKVGNEGVITVEESNTFGL.

23-27 (DGTTT) serves as a coordination point for ATP.

Belongs to the chaperonin (HSP60) family. In terms of assembly, forms a cylinder of 14 subunits composed of two heptameric rings stacked back-to-back. Interacts with the co-chaperonin GroES.

It localises to the cytoplasm. It carries out the reaction ATP + H2O + a folded polypeptide = ADP + phosphate + an unfolded polypeptide.. Its function is as follows. Together with its co-chaperonin GroES, plays an essential role in assisting protein folding. The GroEL-GroES system forms a nano-cage that allows encapsulation of the non-native substrate proteins and provides a physical environment optimized to promote and accelerate protein folding. This chain is Chaperonin GroEL, found in Mycolicibacterium fallax (Mycobacterium fallax).